A 357-amino-acid polypeptide reads, in one-letter code: DNA replication and repair protein RecF (357 aa).

30–37 (GPNGSGKT) provides a ligand contact to ATP.

This sequence belongs to the RecF family.

The protein localises to the cytoplasm. The RecF protein is involved in DNA metabolism; it is required for DNA replication and normal SOS inducibility. RecF binds preferentially to single-stranded, linear DNA. It also seems to bind ATP. The sequence is that of DNA replication and repair protein RecF from Vibrio campbellii (strain ATCC BAA-1116).